A 239-amino-acid polypeptide reads, in one-letter code: Probable GTP-binding protein EngB (239 aa).

Positions 23-219 (QVPEIAFAGR…NDKILELLGL (197 aa)) constitute an EngB-type G domain. GTP is bound by residues 31–38 (GRSNAGKS), 58–62 (GRTQH), 92–95 (DLPG), 159–162 (TKSD), and 193–200 (FTAQLFSA). The Mg(2+) site is built by serine 38 and threonine 60.

Belongs to the TRAFAC class TrmE-Era-EngA-EngB-Septin-like GTPase superfamily. EngB GTPase family. The cofactor is Mg(2+).

Its function is as follows. Necessary for normal cell division and for the maintenance of normal septation. This chain is Probable GTP-binding protein EngB, found in Herminiimonas arsenicoxydans.